The primary structure comprises 543 residues: uncharacterized protein (543 aa).

Positions 1–59 (MLKKNDIVEVEIVDLTHEGAGVAKVDGLVFFVENALPSEKILMRVLKVNKKIGFGKVEK) constitute a TRAM domain. S-adenosyl-L-methionine-binding residues include Gln283, Tyr312, Glu333, and Asp381. Cys408 serves as the catalytic Nucleophile.

It belongs to the class I-like SAM-binding methyltransferase superfamily. RNA M5U methyltransferase family.

This is an uncharacterized protein from Streptococcus pneumoniae (strain ATCC BAA-255 / R6).